We begin with the raw amino-acid sequence, 120 residues long: Large ribosomal subunit protein uL18 (120 aa).

The disordered stretch occupies residues 1 to 22 (MITKTSKNAARQKRHARVRAKL). The segment covering 10–20 (ARQKRHARVRA) has biased composition (basic residues).

Belongs to the universal ribosomal protein uL18 family. As to quaternary structure, part of the 50S ribosomal subunit; part of the 5S rRNA/L5/L18/L25 subcomplex. Contacts the 5S and 23S rRNAs.

Functionally, this is one of the proteins that bind and probably mediate the attachment of the 5S RNA into the large ribosomal subunit, where it forms part of the central protuberance. In Bacillus velezensis (strain DSM 23117 / BGSC 10A6 / LMG 26770 / FZB42) (Bacillus amyloliquefaciens subsp. plantarum), this protein is Large ribosomal subunit protein uL18.